Reading from the N-terminus, the 101-residue chain is Chaperone modulatory protein CbpM (101 aa).

This sequence belongs to the CbpM family.

In terms of biological role, interacts with CbpA and inhibits both the DnaJ-like co-chaperone activity and the DNA binding activity of CbpA. Together with CbpA, modulates the activity of the DnaK chaperone system. Does not inhibit the co-chaperone activity of DnaJ. This chain is Chaperone modulatory protein CbpM, found in Citrobacter koseri (strain ATCC BAA-895 / CDC 4225-83 / SGSC4696).